The sequence spans 873 residues: Sine oculis-binding protein homolog (873 aa).

Basic and acidic residues predominate over residues 1–14 (MAEMEKEGRPPENK). The interval 1-26 (MAEMEKEGRPPENKRSRKPAHPVKRE) is disordered. 2 consecutive FCS-type zinc fingers follow at residues 142-180 (DDVS…KCFA) and 216-256 (FKNN…KCLN). 5 disordered regions span residues 307 to 338 (ARRK…SDTA), 413 to 485 (RGPP…GAPL), 550 to 608 (KPPS…NQAQ), 742 to 766 (STEG…ELAV), and 779 to 811 (SNCH…NPAD). Residues 312 to 338 (PSPASAAGQIQGPGPSASTTASPSDTA) are compositionally biased toward low complexity. Residues 460–485 (IHPPTTPTMPGNPPGLLPPPPPGAPL) are compositionally biased toward pro residues. The segment covering 554-570 (GFSSNGENFIPSNSSET) has biased composition (polar residues). Residues 571–603 (PGGKPPNSSSSPRESKQGSSKPSDSSPSCSGQS) show a composition bias toward low complexity. A compositionally biased stretch (basic and acidic residues) spans 783-793 (LEGDTGKKAGE).

It belongs to the SOBP family.

Its function is as follows. Implicated in development of the cochlea. The polypeptide is Sine oculis-binding protein homolog (Gallus gallus (Chicken)).